The chain runs to 292 residues: Small ribosomal subunit protein uS5 (292 aa).

The segment at 1–56 is disordered; it reads MADDAGAAGGPGGPGGPGMGGRGGFRGGFGSGIRGRGRGRGRGRGRGRGARGGKAE. Alanine 2 carries the post-translational modification N-acetylalanine. Positions 7–34 are enriched in gly residues; that stretch reads AAGGPGGPGGPGMGGRGGFRGGFGSGIR. The segment covering 35-51 has biased composition (basic residues); the sequence is GRGRGRGRGRGRGRGAR. Residues lysine 54 and lysine 58 each participate in a glycyl lysine isopeptide (Lys-Gly) (interchain with G-Cter in ubiquitin) cross-link. Positions 102–165 constitute an S5 DRBM domain; that stretch reads LKDEVLKIMP…ILAKLSIVPV (64 aa). At threonine 251 the chain carries Phosphothreonine. Residue lysine 262 is modified to N6-acetyllysine. Residue serine 263 is modified to Phosphoserine. Residue threonine 269 is modified to Phosphothreonine. Lysine 274 carries the N6-acetyllysine; alternate modification. Lysine 274 is covalently cross-linked (Glycyl lysine isopeptide (Lys-Gly) (interchain with G-Cter in SUMO1); alternate). Lysine 274 participates in a covalent cross-link: Glycyl lysine isopeptide (Lys-Gly) (interchain with G-Cter in SUMO2); alternate. A Glycyl lysine isopeptide (Lys-Gly) (interchain with G-Cter in ubiquitin); alternate cross-link involves residue lysine 274. The residue at position 280 (serine 280) is a Phosphoserine.

Belongs to the universal ribosomal protein uS5 family. Component of the small ribosomal subunit. Interacts with zinc finger protein ZNF277 (via zinc-finger domains); the interaction is direct; the interaction is extra-ribosomal. Interaction with ZNF277 competes with the binding of RPS2 to protein arginine methyltransferase PRMT3. In terms of processing, citrullinated by PADI4 in the Arg/Gly-rich region. Post-translationally, asymmetric arginine dimethylation by PRMT3 occurs at multiple sites in the Arg/Gly-rich region. Monoubiquitinated at Lys-54 and Lys-58 by RNF10 when a ribosome has stalled during translation, leading to its degradation by the proteasome. Deubiquitinated at Lys-54 and Lys-58 by USP10, preventing degradation by the proteasome and promoting 40S ribosome subunit recycling following ribosome dissociation.

The protein resides in the cytoplasm. The protein localises to the nucleus. Its subcellular location is the nucleolus. Its function is as follows. Component of the ribosome, a large ribonucleoprotein complex responsible for the synthesis of proteins in the cell. The small ribosomal subunit (SSU) binds messenger RNAs (mRNAs) and translates the encoded message by selecting cognate aminoacyl-transfer RNA (tRNA) molecules. The large subunit (LSU) contains the ribosomal catalytic site termed the peptidyl transferase center (PTC), which catalyzes the formation of peptide bonds, thereby polymerizing the amino acids delivered by tRNAs into a polypeptide chain. The nascent polypeptides leave the ribosome through a tunnel in the LSU and interact with protein factors that function in enzymatic processing, targeting, and the membrane insertion of nascent chains at the exit of the ribosomal tunnel. Plays a role in the assembly and function of the 40S ribosomal subunit. This Oryctolagus cuniculus (Rabbit) protein is Small ribosomal subunit protein uS5 (RPS2).